Reading from the N-terminus, the 508-residue chain is MGLPWYRVHTVVLNDPGRLLSVHIMHTALVAGWAGSMALYELAVFDPSDPVLDPMWRQGMFVIPFMTRLGITNSWGGWSITGGTITNPGIWSYEGVAGAHIVFSGLCFLAAIWHWVYWDLEIFCDERTGKPSLDLPKIFGIHLFLAGLACFGFGAFHVTGLYGPGIWVSDPYGLTGKVQSVNPSWGVEGFDPFVPGGIASHHIAAGTLGILAGLFHLSVRPPQRLYKGLRMGNIETVLSSSIAAVFFAAFVVAGTMWYGSATTPIELFGPTRYQWDQGYFQQEIYRRVSAGLAENQSLSEVWSKIPEKLAFYDYIGNNPAKGGLFRAGSMDNGDGIAVGWLGHPIFRDKEGRELFVRRMPTFFETFPVVLVDGDGIVRADVPFRRAESKYSVEQVGVTVEFYGGELNGVSYSDPVTVKKYARRAQLGEIFELDRATLKSDGVFRSSPRGWFTFGHASFALLFFFGHIWHGSRTLFRDVFAGIDPDLDAQVEFGAFQKLGDPTTRRQAI.

A run of 6 helical transmembrane segments spans residues 21–36 (SVHIMHTALVAGWAGS), 101–115 (IVFSGLCFLAAIWHW), 140–156 (GIHLFLAGLACFGFGAF), 203–218 (IAAGTLGILAGLFHLS), 237–252 (VLSSSIAAVFFAAFVV), and 457–472 (SFALLFFFGHIWHGSR).

This sequence belongs to the PsbB/PsbC family. PsbB subfamily. PSII is composed of 1 copy each of membrane proteins PsbA, PsbB, PsbC, PsbD, PsbE, PsbF, PsbH, PsbI, PsbJ, PsbK, PsbL, PsbM, PsbT, PsbX, PsbY, PsbZ, Psb30/Ycf12, at least 3 peripheral proteins of the oxygen-evolving complex and a large number of cofactors. It forms dimeric complexes. Binds multiple chlorophylls. PSII binds additional chlorophylls, carotenoids and specific lipids. serves as cofactor.

It localises to the plastid. The protein localises to the chloroplast thylakoid membrane. Its function is as follows. One of the components of the core complex of photosystem II (PSII). It binds chlorophyll and helps catalyze the primary light-induced photochemical processes of PSII. PSII is a light-driven water:plastoquinone oxidoreductase, using light energy to abstract electrons from H(2)O, generating O(2) and a proton gradient subsequently used for ATP formation. The polypeptide is Photosystem II CP47 reaction center protein (Helianthus annuus (Common sunflower)).